We begin with the raw amino-acid sequence, 337 residues long: Phenylalanine--tRNA ligase alpha subunit (337 aa).

Mg(2+) is bound at residue E252.

The protein belongs to the class-II aminoacyl-tRNA synthetase family. Phe-tRNA synthetase alpha subunit type 1 subfamily. As to quaternary structure, tetramer of two alpha and two beta subunits. Mg(2+) is required as a cofactor.

It localises to the cytoplasm. It carries out the reaction tRNA(Phe) + L-phenylalanine + ATP = L-phenylalanyl-tRNA(Phe) + AMP + diphosphate + H(+). The sequence is that of Phenylalanine--tRNA ligase alpha subunit from Francisella tularensis subsp. tularensis (strain SCHU S4 / Schu 4).